The sequence spans 316 residues: Ribosomal protein L11 methyltransferase (316 aa).

Residues Thr163, Gly184, Asp206, and Asn249 each contribute to the S-adenosyl-L-methionine site.

This sequence belongs to the methyltransferase superfamily. PrmA family.

The protein localises to the cytoplasm. It carries out the reaction L-lysyl-[protein] + 3 S-adenosyl-L-methionine = N(6),N(6),N(6)-trimethyl-L-lysyl-[protein] + 3 S-adenosyl-L-homocysteine + 3 H(+). Functionally, methylates ribosomal protein L11. This Pediococcus pentosaceus (strain ATCC 25745 / CCUG 21536 / LMG 10740 / 183-1w) protein is Ribosomal protein L11 methyltransferase.